The chain runs to 508 residues: Endoglucanase 6 (508 aa).

The first 33 residues, 1 to 33 (MLAASLRVEAVAVVAAAVLVLLLSPAAVVVVAG), serve as a signal peptide directing secretion. The Nucleophile role is filled by D89. Residues H419, D471, and E480 contribute to the active site.

The protein belongs to the glycosyl hydrolase 9 (cellulase E) family.

It localises to the secreted. It carries out the reaction Endohydrolysis of (1-&gt;4)-beta-D-glucosidic linkages in cellulose, lichenin and cereal beta-D-glucans.. The protein is Endoglucanase 6 of Oryza sativa subsp. japonica (Rice).